Consider the following 958-residue polypeptide: Nuclear factor NF-kappa-B p100 subunit (958 aa).

The RHD domain occupies 40-230; the sequence is LLMSYLSIIE…DPIHDSKSPG (191 aa). The short motif at 343–347 is the Nuclear localization signal element; the sequence is RKRRK. 2 disordered regions span residues 350 to 374 and 411 to 442; these read PTFN…SFGQ and CSAT…QTDS. The interval 352–390 is GRR; sequence FNNHFYGGGSPMGGAPPGSSFGQGGGSNINYQYTGMNSA. The segment covering 357 to 374 has biased composition (gly residues); the sequence is YGGGSPMGGAPPGSSFGQ. Over residues 412-425 the composition is skewed to polar residues; sequence SATNSSEKNQQPSI. 6 ANK repeats span residues 500–529, 539–568, 572–603, 610–639, 644–674, and 678–707; these read NGDT…SIPN, LQQT…DPTI, YGNS…QKNL, HGLS…NVNS, SGKS…DINA, and GGNT…NVLS. The tract at residues 705–766 is disordered; sequence VLSENDEPVN…SAEEMHRREQ (62 aa). Positions 724 to 734 are enriched in acidic residues; sequence SESDSDVQMDT. The segment covering 753-766 has biased composition (basic and acidic residues); it reads ECEHSAEEMHRREQ. Positions 815 to 901 constitute a Death domain; the sequence is VNVLALETNT…EGVELLCKSE (87 aa). Residues 904–916 are compositionally biased toward basic and acidic residues; that stretch reads AKHHSPAESKNDS. Positions 904-958 are disordered; it reads AKHHSPAESKNDSAYESQSMEVDQSSGNLMDDSQKQTIPVSAAELCPTTEPTIGQ. The span at 917 to 931 shows a compositional bias: polar residues; sequence AYESQSMEVDQSSGN.

Active NF-kappa-B is a heterodimer of an about 52 kDa DNA-binding subunit and the weak DNA-binding subunit p65. Two heterodimers might form a labile tetramer. Post-translationally, while translation occurs, the particular unfolded structure after the GRR repeat promotes the generation of p52 making it an acceptable substrate for the proteasome. This process is known as cotranslational processing. The processed form is active and the unprocessed form acts as an inhibitor (I kappa B-like), being able to form cytosolic complexes with NF-kappa B, trapping it in the cytoplasm. Complete folding of the region downstream of the GRR repeat precludes processing. In terms of processing, constitutive processing is tightly suppressed by its C-terminal processing inhibitory domain, named PID, which contains the death domain. In terms of tissue distribution, expressed in spleen.

It localises to the nucleus. The protein resides in the cytoplasm. Its function is as follows. Appears to have dual functions such as cytoplasmic retention of attached NF-kappa-B proteins and generation of p52 by a cotranslational processing. The proteasome-mediated process ensures the production of both p52 and p100 and preserves their independent function. p52 binds to the kappa-B consensus sequence 5'-GGRNNYYCC-3', located in the enhancer region of genes involved in immune response and acute phase reactions. In concert with RELB, may play a role in the regulation of the circadian clock. This Xenopus laevis (African clawed frog) protein is Nuclear factor NF-kappa-B p100 subunit (nfkb2).